A 1192-amino-acid polypeptide reads, in one-letter code: DNA topoisomerase 2 (1192 aa).

ATP-binding positions include Asn-64, Asn-95, and 142–149 (GTNGVGLK). Residues Glu-438, Asp-539, and Asp-541 each contribute to the Mg(2+) site. The Topo IIA-type catalytic domain maps to 707-1174 (IPNFLDGMTR…PGASVWLEEI (468 aa)). Tyr-800 functions as the O-(5'-phospho-DNA)-tyrosine intermediate in the catalytic mechanism.

It belongs to the type II topoisomerase family. The cofactor is Mg(2+). It depends on Mn(2+) as a cofactor. Requires Ca(2+) as cofactor.

The protein localises to the host cytoplasm. The enzyme catalyses ATP-dependent breakage, passage and rejoining of double-stranded DNA.. In terms of biological role, type II topoisomerase. Processively relaxes supercoiled DNA. Displays DNA-supercoiling activity only when associated with the viral histone-like protein. This chain is DNA topoisomerase 2, found in Ornithodoros (relapsing fever ticks).